The primary structure comprises 609 residues: Mitogen-activated protein kinase kinase kinase 3 (609 aa).

Residues 1–202 are disordered; sequence MPTWWGRKSC…SAVHGSRIGG (202 aa). Over residues 11–28 the composition is skewed to basic and acidic residues; the sequence is KNKDDNHRGIISTDRDIK. 2 stretches are compositionally biased toward low complexity: residues 40 to 64 and 90 to 108; these read PTRG…GFDS and VSGS…SSGS. The Protein kinase domain occupies 214-470; that stretch reads WKKGKFLGSG…ASQLLEHPFL (257 aa). Residues 220-228 and Lys-243 contribute to the ATP site; that span reads LGSGTFGQV. The Proton acceptor role is filled by Asp-339. Disordered regions lie at residues 487–511 and 590–609; these read PRSY…SHDN and MEPS…SRLV. Residues 594–609 show a composition bias toward polar residues; the sequence is SFRTQTPNSPLRSRLV.

This sequence belongs to the protein kinase superfamily. STE Ser/Thr protein kinase family. MAP kinase kinase kinase subfamily. In terms of assembly, interacts with PBL27. Expressed in flower buds, roots, leaves, seedlings, stems and immature siliques. Absent of mature pollen.

The catalysed reaction is L-seryl-[protein] + ATP = O-phospho-L-seryl-[protein] + ADP + H(+). It carries out the reaction L-threonyl-[protein] + ATP = O-phospho-L-threonyl-[protein] + ADP + H(+). In Arabidopsis thaliana (Mouse-ear cress), this protein is Mitogen-activated protein kinase kinase kinase 3.